The sequence spans 312 residues: Beta-ketoacyl-[acyl-carrier-protein] synthase III (312 aa).

Residues cysteine 112 and histidine 237 contribute to the active site. The tract at residues glutamine 238–arginine 242 is ACP-binding. Residue asparagine 267 is part of the active site.

This sequence belongs to the thiolase-like superfamily. FabH family. Homodimer.

The protein resides in the cytoplasm. The catalysed reaction is (2S)-2-methylbutanoyl-CoA + malonyl-[ACP] + H(+) = (4S)-4-methyl-3-oxohexanoyl-[ACP] + CO2 + CoA. It carries out the reaction 2-methylpropanoyl-CoA + malonyl-[ACP] + H(+) = 4-methyl-3-oxopentanoyl-[ACP] + CO2 + CoA. The enzyme catalyses 3-methylbutanoyl-CoA + malonyl-[ACP] + H(+) = 5-methyl-3-oxohexanoyl-[ACP] + CO2 + CoA. It catalyses the reaction malonyl-[ACP] + acetyl-CoA + H(+) = 3-oxobutanoyl-[ACP] + CO2 + CoA. Its pathway is lipid metabolism; fatty acid biosynthesis. In terms of biological role, catalyzes the condensation reaction of fatty acid synthesis by the addition to an acyl acceptor of two carbons from malonyl-ACP. Catalyzes the first condensation reaction which initiates fatty acid synthesis and may therefore play a role in governing the total rate of fatty acid production. Possesses both acetoacetyl-ACP synthase and acetyl transacylase activities. Can use branched-chain acyl-CoAs, with a preference for 2-methylbutanoyl-CoA, the precursor of odd-numbered anteiso fatty acids, at 30 degrees Celsius, which is further increased at a low temperature. Shows weak activity with acetyl-CoA. The sequence is that of Beta-ketoacyl-[acyl-carrier-protein] synthase III from Listeria monocytogenes serotype 1/2a (strain 10403S).